A 245-amino-acid polypeptide reads, in one-letter code: Ribosomal RNA large subunit methyltransferase E (245 aa).

Positions 58, 60, 78, 96, and 123 each coordinate S-adenosyl-L-methionine. The active-site Proton acceptor is K163.

The protein belongs to the class I-like SAM-binding methyltransferase superfamily. RNA methyltransferase RlmE family.

Its subcellular location is the cytoplasm. The enzyme catalyses uridine(2552) in 23S rRNA + S-adenosyl-L-methionine = 2'-O-methyluridine(2552) in 23S rRNA + S-adenosyl-L-homocysteine + H(+). Functionally, specifically methylates the uridine in position 2552 of 23S rRNA at the 2'-O position of the ribose in the fully assembled 50S ribosomal subunit. The chain is Ribosomal RNA large subunit methyltransferase E from Methanocaldococcus jannaschii (strain ATCC 43067 / DSM 2661 / JAL-1 / JCM 10045 / NBRC 100440) (Methanococcus jannaschii).